The following is a 478-amino-acid chain: tRNA (guanine(10)-N(2))-methyltransferase TRMT11 (478 aa).

Residues 457–478 (EERARSEMANAENVKSKGKEDV) are disordered.

Belongs to the class I-like SAM-binding methyltransferase superfamily. TRM11 methyltransferase family. As to quaternary structure, part of the heterodimeric TRMT11-TRM112 methyltransferase complex; this complex forms an active tRNA methyltransferase, where TRMT112 acts as an activator of the catalytic subunit TRMT11.

It is found in the cytoplasm. It catalyses the reaction guanosine(10) in tRNA + S-adenosyl-L-methionine = N(2)-methylguanosine(10) in tRNA + S-adenosyl-L-homocysteine + H(+). Catalytic subunit of the TRMT11-TRM112 methyltransferase complex, that specifically mediates the S-adenosyl-L-methionine-dependent N(2)-methylation of guanosine nucleotide at position 10 (m2G10) in tRNAs. This is one of the major tRNA (guanine-N(2))-methyltransferases. The protein is tRNA (guanine(10)-N(2))-methyltransferase TRMT11 (trmt11.L) of Xenopus laevis (African clawed frog).